Consider the following 741-residue polypeptide: Zinc metalloproteinase nas-30 (741 aa).

2 stretches are compositionally biased toward low complexity: residues lysine 71–proline 85 and proline 97–proline 118. Residues lysine 71–glutamine 122 are disordered. Positions lysine 324–asparagine 516 constitute a Peptidase M12A domain. 6 disulfides stabilise this stretch: cysteine 364-cysteine 515, cysteine 385-cysteine 404, cysteine 519-cysteine 539, cysteine 541-cysteine 550, cysteine 562-cysteine 583, and cysteine 610-cysteine 630. Histidine 412 lines the Zn(2+) pocket. The active site involves glutamate 413. Zn(2+) contacts are provided by histidine 416 and histidine 422. The EGF-like domain occupies cysteine 539–cysteine 550. Residues cysteine 550–leucine 648 form the CUB domain. An N-linked (GlcNAc...) asparagine glycan is attached at asparagine 633.

Zn(2+) serves as cofactor.

Functionally, metalloprotease. This Caenorhabditis elegans protein is Zinc metalloproteinase nas-30.